A 339-amino-acid chain; its full sequence is Ketol-acid reductoisomerase (NADP(+)) (339 aa).

The KARI N-terminal Rossmann domain maps to methionine 1–threonine 182. NADP(+)-binding positions include tyrosine 24–glutamine 27, arginine 48, serine 51, threonine 53, and aspartate 83–glutamine 86. Histidine 108 is an active-site residue. An NADP(+)-binding site is contributed by glycine 134. The KARI C-terminal knotted domain occupies threonine 183–isoleucine 328. Residues aspartate 191, glutamate 195, glutamate 227, and glutamate 231 each coordinate Mg(2+). A substrate-binding site is contributed by serine 252.

The protein belongs to the ketol-acid reductoisomerase family. Mg(2+) serves as cofactor.

The catalysed reaction is (2R)-2,3-dihydroxy-3-methylbutanoate + NADP(+) = (2S)-2-acetolactate + NADPH + H(+). It catalyses the reaction (2R,3R)-2,3-dihydroxy-3-methylpentanoate + NADP(+) = (S)-2-ethyl-2-hydroxy-3-oxobutanoate + NADPH + H(+). The protein operates within amino-acid biosynthesis; L-isoleucine biosynthesis; L-isoleucine from 2-oxobutanoate: step 2/4. Its pathway is amino-acid biosynthesis; L-valine biosynthesis; L-valine from pyruvate: step 2/4. Involved in the biosynthesis of branched-chain amino acids (BCAA). Catalyzes an alkyl-migration followed by a ketol-acid reduction of (S)-2-acetolactate (S2AL) to yield (R)-2,3-dihydroxy-isovalerate. In the isomerase reaction, S2AL is rearranged via a Mg-dependent methyl migration to produce 3-hydroxy-3-methyl-2-ketobutyrate (HMKB). In the reductase reaction, this 2-ketoacid undergoes a metal-dependent reduction by NADPH to yield (R)-2,3-dihydroxy-isovalerate. This is Ketol-acid reductoisomerase (NADP(+)) from Methylocella silvestris (strain DSM 15510 / CIP 108128 / LMG 27833 / NCIMB 13906 / BL2).